The sequence spans 213 residues: Putative cytochrome c-type biogenesis protein HI_1454 (213 aa).

6 consecutive transmembrane segments (helical) span residues 15-35 (GLAS…FGIL), 46-66 (FLFI…FGFL), 77-97 (IIAG…FKIG), 118-138 (AFVL…PILA), 154-174 (ASMM…FSFF), and 192-212 (FKIG…TNNF).

The protein belongs to the DsbD family.

The protein resides in the cell membrane. Its function is as follows. Could be involved in cytochrome c synthesis. The sequence is that of Putative cytochrome c-type biogenesis protein HI_1454 from Haemophilus influenzae (strain ATCC 51907 / DSM 11121 / KW20 / Rd).